The sequence spans 292 residues: GID complex substrate-recognition subunit 10 (292 aa).

Belongs to the GID4/VID24 family. Substrate-recognition component of the GID/CTLH ubiquitin ligase complex. In the absence of stress, the complex exists as an inactive anticipatory complex (GID(Ant)), composed of VID30/GID1, the E3 ubiquitin-ligase RMD5/GID2, VID28/GID5, GID8, and the RING-like subunit FYV10/GID9, awaiting a substrate receptor to form the active E3 ligase complex. When cells are shifted to glucose-containing medium, the substrate receptor VID24/GID4 is induced and becomes part of the complex, named GID(SR4). Under osmotic or heat stress, the substrate receptor GID10 is induced and becomes part of the complex, named GID(SR10). Interacts with proteins that have an N-terminal Pro/N-degron, including ART2.

Its function is as follows. Substrate-recognition component of the GID E3 ligase complex recruiting N termini and catalyzing ubiquitination of proteins targeted for degradation. GID E3 is regulated through assembly with interchangeable N-degron-binding substrate receptors induced by distinct environmental perturbations. Required for the adaptation to osmotic or heat stress. Required for the regulation of protein levels of the adapter protein ART2, a component of the ART-Rsp5 ubiquitin ligase pathway, part of the plasma membrane quality control. Specific for substrates with an N-terminal Pro (Pro/N-degron), including ART2. Has high affinity for the N-terminal sequence Pro-Tyr-Ile-Thr, and also recognizes nonproline residues such as Met-Tyr-Ile-Thr-Val or Val-Cys-Phe-His. The polypeptide is GID complex substrate-recognition subunit 10 (Saccharomyces cerevisiae (strain ATCC 204508 / S288c) (Baker's yeast)).